The primary structure comprises 550 residues: Glucose-6-phosphate isomerase (550 aa).

Catalysis depends on E356, which acts as the Proton donor. Catalysis depends on residues H387 and K515.

The protein belongs to the GPI family.

It is found in the cytoplasm. It catalyses the reaction alpha-D-glucose 6-phosphate = beta-D-fructose 6-phosphate. It functions in the pathway carbohydrate biosynthesis; gluconeogenesis. The protein operates within carbohydrate degradation; glycolysis; D-glyceraldehyde 3-phosphate and glycerone phosphate from D-glucose: step 2/4. Functionally, catalyzes the reversible isomerization of glucose-6-phosphate to fructose-6-phosphate. This is Glucose-6-phosphate isomerase from Aliivibrio fischeri (strain MJ11) (Vibrio fischeri).